The sequence spans 245 residues: MDKTRTFLDVKEYPDTEVQKNRVLTLEEWQEKWVSRRIGFHQEQGHKLLKKHLDTFLKGENGLRVFFPLCGKAVEMKWFADRGHSVVGVEISELGIREFFAEQNLSYTEEPIVEIPGGKIFKSSSGNISLYCCSLFDLPRANIGKFDRIWDRGALVAINPGDRECYADIMLSLTRKGFHYLLAVLCYDPTKHAGPPFYVPEAEIKKLFGSICNIHCLEKVDVFEEQHKSWGIDYIIEKLYLFTEK.

An S-adenosyl-L-methionine-binding site is contributed by 29-40; it reads WQEKWVSRRIGF. Residue F40 participates in substrate binding. K58 is modified (N6-acetyllysine). Residues L69, E90, and R152 each coordinate S-adenosyl-L-methionine.

The protein belongs to the class I-like SAM-binding methyltransferase superfamily. TPMT family. As to quaternary structure, monomer.

It is found in the cytoplasm. It catalyses the reaction S-adenosyl-L-methionine + a thiopurine = S-adenosyl-L-homocysteine + a thiopurine S-methylether.. The sequence is that of Thiopurine S-methyltransferase (TPMT) from Lycaon pictus (African wild dog).